Reading from the N-terminus, the 473-residue chain is Photosystem II CP43 reaction center protein (473 aa).

Positions 1 to 14 (MKNLYSLRRFYHVE) are excised as a propeptide. Position 15 is an N-acetylthreonine (Thr-15). At Thr-15 the chain carries Phosphothreonine. A run of 5 helical transmembrane segments spans residues 69-93 (LFEVAHFVPEKPMYEQGLILLPHLA), 134-155 (LVGPETLEESFPFFGYVWKDKN), 178-200 (KAMYFGGIYDTWAPGGGDVRIIS), 255-275 (KPWAWARRAFVWSGEAYLSYS), and 291-312 (WFNTTAYPSEFYGPTGPEASQS). Residue Glu-367 participates in [CaMn4O5] cluster binding. Residues 447-471 (RARAAAAGFEKGIDRDNEPVLSMRP) traverse the membrane as a helical segment.

This sequence belongs to the PsbB/PsbC family. PsbC subfamily. PSII is composed of 1 copy each of membrane proteins PsbA, PsbB, PsbC, PsbD, PsbE, PsbF, PsbH, PsbI, PsbJ, PsbK, PsbL, PsbM, PsbT, PsbX, PsbY, PsbZ, Psb30/Ycf12, at least 3 peripheral proteins of the oxygen-evolving complex and a large number of cofactors. It forms dimeric complexes. Binds multiple chlorophylls and provides some of the ligands for the Ca-4Mn-5O cluster of the oxygen-evolving complex. It may also provide a ligand for a Cl- that is required for oxygen evolution. PSII binds additional chlorophylls, carotenoids and specific lipids. serves as cofactor.

The protein resides in the plastid. It is found in the chloroplast thylakoid membrane. Its function is as follows. One of the components of the core complex of photosystem II (PSII). It binds chlorophyll and helps catalyze the primary light-induced photochemical processes of PSII. PSII is a light-driven water:plastoquinone oxidoreductase, using light energy to abstract electrons from H(2)O, generating O(2) and a proton gradient subsequently used for ATP formation. The polypeptide is Photosystem II CP43 reaction center protein (Chlorella vulgaris (Green alga)).